Here is a 176-residue protein sequence, read N- to C-terminus: NAD(P)H-quinone oxidoreductase subunit 6, chloroplastic (176 aa).

5 helical membrane passes run 10–30 (FLLVFLGSGLILGSLGVVLLT), 32–52 (PIFSAFSLGLVLVCISLFYIL), 63–83 (LLIYVGAINILIIFAVMFMNS), 92–112 (LWTVGDGITLIVCTSIFVSLV), and 152–172 (FFLPFELISIILLVALIGTIV).

It belongs to the complex I subunit 6 family. NDH is composed of at least 16 different subunits, 5 of which are encoded in the nucleus.

The protein localises to the plastid. It is found in the chloroplast thylakoid membrane. The enzyme catalyses a plastoquinone + NADH + (n+1) H(+)(in) = a plastoquinol + NAD(+) + n H(+)(out). It catalyses the reaction a plastoquinone + NADPH + (n+1) H(+)(in) = a plastoquinol + NADP(+) + n H(+)(out). NDH shuttles electrons from NAD(P)H:plastoquinone, via FMN and iron-sulfur (Fe-S) centers, to quinones in the photosynthetic chain and possibly in a chloroplast respiratory chain. The immediate electron acceptor for the enzyme in this species is believed to be plastoquinone. Couples the redox reaction to proton translocation, and thus conserves the redox energy in a proton gradient. This chain is NAD(P)H-quinone oxidoreductase subunit 6, chloroplastic (ndhG), found in Cicer arietinum (Chickpea).